A 977-amino-acid polypeptide reads, in one-letter code: Phosphatidylinositol 4-kinase PIK1alpha (977 aa).

The PIK helical domain occupies 1–125 (MSADITETPN…QAVRNLITKI (125 aa)). Residues 205–261 (MSADIPKGSHSDDETATSSSIKPSLSRSASVPRRNTKKTSLSFSSDESEAYTTDDDD) form a disordered region. Residues 220–233 (ATSSSIKPSLSRSA) are compositionally biased toward polar residues. Residues 250–261 (DESEAYTTDDDD) are compositionally biased toward acidic residues. Residues 679–960 (EDWNTKKQRI…FLIGKSLGSM (282 aa)) enclose the PI3K/PI4K catalytic domain. The tract at residues 685-691 (KQRIKKS) is G-loop. Residues 826-834 (QIKDRHNGN) are catalytic loop. The activation loop stretch occupies residues 845 to 869 (HIDFGFLLSNSPGSVGFEAAPFKLT).

It belongs to the PI3/PI4-kinase family. Type III PI4K subfamily.

It is found in the nucleus. It carries out the reaction a 1,2-diacyl-sn-glycero-3-phospho-(1D-myo-inositol) + ATP = a 1,2-diacyl-sn-glycero-3-phospho-(1D-myo-inositol 4-phosphate) + ADP + H(+). Functionally, acts on phosphatidylinositol (PI) in the first committed step in the production of the second messenger inositol 1,4,5,-trisphosphate. The sequence is that of Phosphatidylinositol 4-kinase PIK1alpha (PIKALPHA) from Candida albicans (strain SC5314 / ATCC MYA-2876) (Yeast).